The chain runs to 222 residues: Cytidylate kinase (222 aa).

10-18 (GPSASGKGT) lines the ATP pocket.

The protein belongs to the cytidylate kinase family. Type 1 subfamily.

It is found in the cytoplasm. It carries out the reaction CMP + ATP = CDP + ADP. It catalyses the reaction dCMP + ATP = dCDP + ADP. The sequence is that of Cytidylate kinase from Chromobacterium violaceum (strain ATCC 12472 / DSM 30191 / JCM 1249 / CCUG 213 / NBRC 12614 / NCIMB 9131 / NCTC 9757 / MK).